The primary structure comprises 122 residues: Large ribosomal subunit protein uL14 (122 aa).

This sequence belongs to the universal ribosomal protein uL14 family. Part of the 50S ribosomal subunit. Forms a cluster with proteins L3 and L19. In the 70S ribosome, L14 and L19 interact and together make contacts with the 16S rRNA in bridges B5 and B8.

Functionally, binds to 23S rRNA. Forms part of two intersubunit bridges in the 70S ribosome. The chain is Large ribosomal subunit protein uL14 from Streptococcus suis (strain 05ZYH33).